We begin with the raw amino-acid sequence, 442 residues long: MLSDTICAIASGQINQAISIIRISGPNAFKIMEKIFLGKVGRSMEITFGWIHDDNQKIDQVLVLWFAGNKNFVGEDTVEINAHGGVLNTNLILELILKTKLARLANPGEFSLRAFLNGKIDLVKAQAINDLIHAEVKVQHQAALNQFLGKSSNFIKNLIEKIEEIIGIIEVNIDYPEYDDVEILTSDVLLPRINQLLADFDQLIKIANNSRLIYQGIKTCLVGAPNSGKSSLLNILINENKAIISEIPGTTRDVVEGNFVLDGLLFKLFDTAGIRKTTEKIEQIGIEKSYESIKKADLILHIIDASEKNRQNLDLKAKTRPDQIYLKIYNKSDLLENQEEFKDEILISAKYQKIENLLEKIKSIFAFLGKNKEFVANSFQISQIELGKLAILDAKTSLESGFGPEIAIVDLRIAWKELKTIFGRVDDENLLDSIFSKFCLGK.

The (6S)-5-formyl-5,6,7,8-tetrahydrofolate site is built by R22, E79, and K119. The 151-residue stretch at 216–366 (GIKTCLVGAP…LLEKIKSIFA (151 aa)) folds into the TrmE-type G domain. N226 is a binding site for K(+). GTP is bound by residues 226 to 231 (NSGKSS), 245 to 251 (SEIPGTT), and 270 to 273 (DTAG). S230 contributes to the Mg(2+) binding site. Positions 245, 247, and 250 each coordinate K(+). T251 serves as a coordination point for Mg(2+). Residue K442 coordinates (6S)-5-formyl-5,6,7,8-tetrahydrofolate.

This sequence belongs to the TRAFAC class TrmE-Era-EngA-EngB-Septin-like GTPase superfamily. TrmE GTPase family. In terms of assembly, homodimer. Heterotetramer of two MnmE and two MnmG subunits. K(+) is required as a cofactor.

The protein resides in the cytoplasm. Exhibits a very high intrinsic GTPase hydrolysis rate. Involved in the addition of a carboxymethylaminomethyl (cmnm) group at the wobble position (U34) of certain tRNAs, forming tRNA-cmnm(5)s(2)U34. The polypeptide is tRNA modification GTPase MnmE (Mesomycoplasma hyopneumoniae (strain J / ATCC 25934 / NCTC 10110) (Mycoplasma hyopneumoniae)).